Here is a 306-residue protein sequence, read N- to C-terminus: Uracil-DNA glycosylase (306 aa).

The segment at 1 to 25 (MIGQKTLYSFFSPTPTGKRTTRSPE) is interaction with FAM72A. A disordered region spans residues 11 to 31 (FSPTPTGKRTTRSPEPVPGSG). The residue at position 12 (Ser12) is a Phosphoserine. Positions 17–19 (GKR) match the Important for nuclear sorting motif. Ser23, Ser43, and Ser57 each carry phosphoserine. The interval 66–81 (RIQRNKAAALLRLAAR) is interaction with RPA2. Residue Gln146 participates in uracil binding. Asp147 (proton acceptor) is an active-site residue. His150 provides a ligand contact to dsDNA. Phe160 is a uracil binding site. Position 171 (Ser171) interacts with dsDNA. Uracil is bound at residue Asn206. Positions 249, 270, 272, and 278 each coordinate dsDNA. His270 contacts uracil. Lys288 carries the post-translational modification N6-acetyllysine.

The protein belongs to the uracil-DNA glycosylase (UDG) superfamily. UNG family. Interacts with RPA2 subunit of the RPA trimer; this interaction mediates UNG2 recruitment to RPA-coated single-stranded DNA at stalled replication forks. Interacts with PCNA; this interaction mediates UNG2 recruitment to S-phase replication foci. Interacts (via N-terminus) with FAM72A. Post-translationally, processed by cleavage of a transit peptide.

The protein resides in the mitochondrion. It localises to the nucleus. The enzyme catalyses Hydrolyzes single-stranded DNA or mismatched double-stranded DNA and polynucleotides, releasing free uracil.. It carries out the reaction a 2'-deoxyuridine in single-stranded DNA + H2O = a 2'-deoxyribose 5'-monophosphate in single-stranded DNA + uracil. The catalysed reaction is a 2'-deoxyuridine in double-stranded DNA + H2O = a 2'-deoxyribose 5'-monophosphate in double-stranded DNA + uracil. In terms of biological role, uracil-DNA glycosylase that hydrolyzes the N-glycosidic bond between uracil and deoxyribose in single- and double-stranded DNA (ssDNA and dsDNA) to release a free uracil residue and form an abasic (apurinic/apyrimidinic; AP) site. Excises uracil residues arising as a result of misincorporation of dUMP residues by DNA polymerase during replication or due to spontaneous or enzymatic deamination of cytosine. Mediates error-free base excision repair (BER) of uracil at replication forks. According to the model, it is recruited by PCNA to S-phase replication forks to remove misincorporated uracil at U:A base mispairs in nascent DNA strands. Via trimeric RPA it is recruited to ssDNA stretches ahead of the polymerase to allow detection and excision of deaminated cytosines prior to replication. The resultant AP sites temporarily stall replication, allowing time to repair the lesion. Mediates mutagenic uracil processing involved in antibody affinity maturation. Processes AICDA-induced U:G base mispairs at variable Ig regions leading to the generation of transversion mutations. Additionally, it operates at switch sites of Ig constant regions where it mediates Ig isotype class switch recombination. Excises AICDA-induced uracil residues forming AP sites that are subsequently nicked by APEX1 endonuclease. The accumulation of staggered nicks in opposite strands results in double strand DNA breaks that are finally resolved via non-homologous end joining repair pathway. The chain is Uracil-DNA glycosylase (Ung) from Mus musculus (Mouse).